The chain runs to 447 residues: Hydroxymethylglutaryl-CoA synthase (447 aa).

Catalysis depends on Glu-86, which acts as the Proton donor/acceptor. The active-site Acyl-thioester intermediate is Cys-118. (3S)-3-hydroxy-3-methylglutaryl-CoA-binding residues include Cys-118, Asn-156, Thr-160, Ser-210, His-250, Lys-259, Asn-327, and Ser-361. His-250 functions as the Proton donor/acceptor in the catalytic mechanism. Position 398 is a phosphothreonine (Thr-398).

This sequence belongs to the thiolase-like superfamily. HMG-CoA synthase family.

The enzyme catalyses acetoacetyl-CoA + acetyl-CoA + H2O = (3S)-3-hydroxy-3-methylglutaryl-CoA + CoA + H(+). The protein operates within metabolic intermediate biosynthesis; (R)-mevalonate biosynthesis; (R)-mevalonate from acetyl-CoA: step 2/3. In terms of biological role, hydroxymethylglutaryl-CoA synthase; part of the first module of ergosterol biosynthesis pathway that includes the early steps of the pathway, conserved across all eukaryotes, and which results in the formation of mevalonate from acetyl-coenzyme A (acetyl-CoA). Hcs1 condenses acetyl-CoA with acetoacetyl-CoA to form hydroxymethylglutaryl-CoA (HMG-CoA). The first module starts with the action of the cytosolic acetyl-CoA acetyltransferase eg10 that catalyzes the formation of acetoacetyl-CoA. The hydroxymethylglutaryl-CoA synthases erg13 then condenses acetyl-CoA with acetoacetyl-CoA to form HMG-CoA. The rate-limiting step of the early module is the reduction to mevalonate by the 3-hydroxy-3-methylglutaryl-coenzyme A (HMG-CoA) reductases hcs1. The chain is Hydroxymethylglutaryl-CoA synthase from Schizosaccharomyces pombe (strain 972 / ATCC 24843) (Fission yeast).